The sequence spans 157 residues: Regenerating islet-derived protein 4 (157 aa).

The first 22 residues, 1–22 (MASKGVRLLLLLSWVAGPEVLS), serve as a signal peptide directing secretion. Residues C29 and C40 are joined by a disulfide bond. One can recognise a C-type lectin domain in the interval 36 to 154 (YRSHCYGYFR…CANRQHFLCK (119 aa)). N-linked (GlcNAc...) asparagine glycans are attached at residues N49 and N62. Cystine bridges form between C57–C153 and C128–C145. A carbohydrate is bound by residues 97–102 (DPQKKQ) and 134–136 (KDK).

The protein resides in the secreted. Its function is as follows. Calcium-independent lectin displaying mannose-binding specificity and able to maintain carbohydrate recognition activity in an acidic environment. May be involved in inflammatory and metaplastic responses of the gastrointestinal epithelium. In Mus musculus (Mouse), this protein is Regenerating islet-derived protein 4 (Reg4).